Here is a 599-residue protein sequence, read N- to C-terminus: Proline--tRNA ligase (599 aa).

This sequence belongs to the class-II aminoacyl-tRNA synthetase family. ProS type 1 subfamily. Homodimer.

It localises to the cytoplasm. The enzyme catalyses tRNA(Pro) + L-proline + ATP = L-prolyl-tRNA(Pro) + AMP + diphosphate. Its function is as follows. Catalyzes the attachment of proline to tRNA(Pro) in a two-step reaction: proline is first activated by ATP to form Pro-AMP and then transferred to the acceptor end of tRNA(Pro). As ProRS can inadvertently accommodate and process non-cognate amino acids such as alanine and cysteine, to avoid such errors it has two additional distinct editing activities against alanine. One activity is designated as 'pretransfer' editing and involves the tRNA(Pro)-independent hydrolysis of activated Ala-AMP. The other activity is designated 'posttransfer' editing and involves deacylation of mischarged Ala-tRNA(Pro). The misacylated Cys-tRNA(Pro) is not edited by ProRS. The chain is Proline--tRNA ligase from Prochlorococcus marinus (strain MIT 9313).